The chain runs to 706 residues: Protein-glutamine gamma-glutamyltransferase 6 (706 aa).

Ca(2+)-binding residues include Ala-223, Asn-226, and Asn-228. Residue Cys-274 is part of the active site. Residues Asp-303, Asp-305, Asn-307, Ser-309, and Asp-327 each contribute to the Ca(2+) site. Catalysis depends on residues His-333 and Asp-356. Positions 396, 417, 445, and 450 each coordinate Ca(2+).

Belongs to the transglutaminase superfamily. Transglutaminase family. The cofactor is Ca(2+).

Its subcellular location is the cytoplasm. It carries out the reaction L-glutaminyl-[protein] + L-lysyl-[protein] = [protein]-L-lysyl-N(6)-5-L-glutamyl-[protein] + NH4(+). Catalyzes the cross-linking of proteins and the conjugation of polyamines to proteins. The polypeptide is Protein-glutamine gamma-glutamyltransferase 6 (TGM6) (Homo sapiens (Human)).